The sequence spans 223 residues: N-terminal Xaa-Pro-Lys N-methyltransferase 1 (223 aa).

Position 1 is an N-acetylmethionine (M1). T2 carries the post-translational modification N-acetylthreonine; in N-terminal Xaa-Pro-Lys N-methyltransferase 1, N-terminally processed. S-adenosyl-L-methionine contacts are provided by residues G69, R74, 91-93 (DVT), 119-120 (LQ), and Q135.

The protein belongs to the methyltransferase superfamily. NTM1 family.

The protein localises to the nucleus. The catalysed reaction is N-terminal L-alanyl-L-prolyl-L-lysyl-[protein] + 3 S-adenosyl-L-methionine = N-terminal N,N,N-trimethyl-L-alanyl-L-prolyl-L-lysyl-[protein] + 3 S-adenosyl-L-homocysteine + 3 H(+). It carries out the reaction N-terminal L-seryl-L-prolyl-L-lysyl-[protein] + 3 S-adenosyl-L-methionine = N-terminal N,N,N-trimethyl-L-seryl-L-prolyl-L-lysyl-[protein] + 3 S-adenosyl-L-homocysteine + 3 H(+). It catalyses the reaction N-terminal L-prolyl-L-prolyl-L-lysyl-[protein] + 2 S-adenosyl-L-methionine = N-terminal N,N-dimethyl-L-prolyl-L-prolyl-L-lysyl-[protein] + 2 S-adenosyl-L-homocysteine + 2 H(+). In terms of biological role, distributive alpha-N-methyltransferase that methylates the N-terminus of target proteins containing the N-terminal motif [Ala/Gly/Pro/Ser]-Pro-Lys when the initiator Met is cleaved. Specifically catalyzes mono-, di- or tri-methylation of the exposed alpha-amino group of the Ala, Gly or Ser residue in the [Ala/Gly/Ser]-Pro-Lys motif and mono- or di-methylation of Pro in the Pro-Pro-Lys motif. Some of the substrates may be primed by NTMT2-mediated monomethylation. Catalyzes the trimethylation of the N-terminal Gly in CENPA (after removal of Met-1). Responsible for the N-terminal methylation of KLHL31, MYL2, MYL3, RB1, RCC1, RPL23A and SET. Required during mitosis for normal bipolar spindle formation and chromosome segregation via its action on RCC1. This is N-terminal Xaa-Pro-Lys N-methyltransferase 1 (Ntmt1) from Rattus norvegicus (Rat).